Reading from the N-terminus, the 405-residue chain is Octaketide synthase 3 (405 aa).

The segment covering 1 to 10 (MGSIAESSPL) has biased composition (polar residues). A disordered region spans residues 1–22 (MGSIAESSPLMSRENVEGIRKA). Cys176 is a catalytic residue. CoA-binding positions include Ser283 and 320 to 323 (GGRA).

Belongs to the thiolase-like superfamily. Chalcone/stilbene synthases family. Homodimer.

The protein operates within secondary metabolite biosynthesis; flavonoid biosynthesis. Catalyzes the iterative condensations of 8 molecules of malonyl-CoA to produce aromatic octaketides, SEK4 and SEK4b, the products of the minimal polyketide synthase for the benzoisochromanequinone actinorhodin. May be involved in the biosynthesis of the octaketide barbaloin. The polypeptide is Octaketide synthase 3 (PKS5) (Aloe arborescens (Kidachi aloe)).